The primary structure comprises 132 residues: Large ribosomal subunit protein uL14 (132 aa).

The protein belongs to the universal ribosomal protein uL14 family. As to quaternary structure, part of the 50S ribosomal subunit. Forms a cluster with proteins L3 and L24e, part of which may contact the 16S rRNA in 2 intersubunit bridges.

Binds to 23S rRNA. Forms part of two intersubunit bridges in the 70S ribosome. In Thermoplasma volcanium (strain ATCC 51530 / DSM 4299 / JCM 9571 / NBRC 15438 / GSS1), this protein is Large ribosomal subunit protein uL14.